Consider the following 514-residue polypeptide: Probable cytosol aminopeptidase (514 aa).

Residues K266 and D271 each coordinate Mn(2+). Residue K278 is part of the active site. D289, D357, and E359 together coordinate Mn(2+). Residue R361 is part of the active site.

The protein belongs to the peptidase M17 family. Requires Mn(2+) as cofactor.

The protein localises to the cytoplasm. The enzyme catalyses Release of an N-terminal amino acid, Xaa-|-Yaa-, in which Xaa is preferably Leu, but may be other amino acids including Pro although not Arg or Lys, and Yaa may be Pro. Amino acid amides and methyl esters are also readily hydrolyzed, but rates on arylamides are exceedingly low.. The catalysed reaction is Release of an N-terminal amino acid, preferentially leucine, but not glutamic or aspartic acids.. Its function is as follows. Presumably involved in the processing and regular turnover of intracellular proteins. Catalyzes the removal of unsubstituted N-terminal amino acids from various peptides. In Oleidesulfovibrio alaskensis (strain ATCC BAA-1058 / DSM 17464 / G20) (Desulfovibrio alaskensis), this protein is Probable cytosol aminopeptidase.